The primary structure comprises 353 residues: UDP-3-O-acylglucosamine N-acyltransferase (353 aa).

His242 functions as the Proton acceptor in the catalytic mechanism.

Belongs to the transferase hexapeptide repeat family. LpxD subfamily. As to quaternary structure, homotrimer.

It carries out the reaction a UDP-3-O-[(3R)-3-hydroxyacyl]-alpha-D-glucosamine + a (3R)-hydroxyacyl-[ACP] = a UDP-2-N,3-O-bis[(3R)-3-hydroxyacyl]-alpha-D-glucosamine + holo-[ACP] + H(+). The protein operates within bacterial outer membrane biogenesis; LPS lipid A biosynthesis. In terms of biological role, catalyzes the N-acylation of UDP-3-O-acylglucosamine using 3-hydroxyacyl-ACP as the acyl donor. Is involved in the biosynthesis of lipid A, a phosphorylated glycolipid that anchors the lipopolysaccharide to the outer membrane of the cell. In Pseudomonas paraeruginosa (strain DSM 24068 / PA7) (Pseudomonas aeruginosa (strain PA7)), this protein is UDP-3-O-acylglucosamine N-acyltransferase.